A 503-amino-acid chain; its full sequence is Glycoprotein 3-alpha-L-fucosyltransferase A (503 aa).

Over 1–10 (MRRPKISLKK) the chain is Cytoplasmic. Residues 11–28 (YFYLTLICALLLIFGFSL) form a helical; Signal-anchor for type II membrane protein membrane-spanning segment. At 29–503 (KEREIWKTLS…KDVISDSSDD (475 aa)) the chain is on the lumenal side. The tract at residues 44-71 (ITTQQQQHQHLHQLQSMDEEHPMATSST) is disordered. A compositionally biased stretch (low complexity) spans 47 to 58 (QQQQHQHLHQLQ). 3 N-linked (GlcNAc...) asparagine glycosylation sites follow: asparagine 262, asparagine 295, and asparagine 299.

It belongs to the glycosyltransferase 10 family. The cofactor is Mn(2+).

The protein resides in the golgi apparatus. It is found in the golgi stack membrane. The enzyme catalyses N(4)-{beta-D-GlcNAc-(1-&gt;2)-alpha-D-Man-(1-&gt;3)-[beta-D-GlcNAc-(1-&gt;2)-alpha-D-Man-(1-&gt;6)]-beta-D-Man-(1-&gt;4)-beta-D-GlcNAc-(1-&gt;4)-beta-D-GlcNAc}-L-asparaginyl-[protein] + GDP-beta-L-fucose = N(4)-{beta-D-GlcNAc-(1-&gt;2)-alpha-D-Man-(1-&gt;3)-[beta-D-GlcNAc-(1-&gt;2)-alpha-D-Man-(1-&gt;6)]-beta-D-Man-(1-&gt;4)-beta-D-GlcNAc-(1-&gt;4)-[alpha-L-Fuc(1-&gt;3)]-beta-D-GlcNAc}-L-asparaginyl-[protein] + GDP + H(+). It functions in the pathway protein modification; protein glycosylation. Functionally, catalyzes alpha-1,3 glycosidic linkages of N-glycans. Plays a role in neuronal development by promoting ventral nerve cord formation, possibly by promoting interactions between migrating cells and the extracellular matrix or by promoting neural activity. This is Glycoprotein 3-alpha-L-fucosyltransferase A (FucTA) from Drosophila melanogaster (Fruit fly).